Reading from the N-terminus, the 380-residue chain is Epoxyqueuosine reductase (380 aa).

Residue Asp-139 is the Proton donor of the active site. Residues 181 to 213 (IPFEPDDPLLDSCGDCTICVDRCPTSALVGNGQ) enclose the 4Fe-4S ferredoxin-type 1 domain. Residues Cys-193, Cys-196, Cys-199, Cys-203, Cys-219, Cys-245, Cys-248, and Cys-252 each coordinate [4Fe-4S] cluster. A 4Fe-4S ferredoxin-type 2 domain is found at 234–263 (YRYKIGNRLYGCDTCQQVCPKNRGINTEQD).

It belongs to the QueG family. In terms of assembly, monomer. Requires cob(II)alamin as cofactor. The cofactor is [4Fe-4S] cluster.

It is found in the cytoplasm. The catalysed reaction is epoxyqueuosine(34) in tRNA + AH2 = queuosine(34) in tRNA + A + H2O. It participates in tRNA modification; tRNA-queuosine biosynthesis. Functionally, catalyzes the conversion of epoxyqueuosine (oQ) to queuosine (Q), which is a hypermodified base found in the wobble positions of tRNA(Asp), tRNA(Asn), tRNA(His) and tRNA(Tyr). The chain is Epoxyqueuosine reductase from Staphylococcus aureus (strain NCTC 8325 / PS 47).